We begin with the raw amino-acid sequence, 380 residues long: tRNA-specific 2-thiouridylase MnmA (380 aa).

Residues 26–33 and Leu52 contribute to the ATP site; that span reads AMSGGVDS. Cys120 functions as the Nucleophile in the catalytic mechanism. The cysteines at positions 120 and 217 are disulfide-linked. Gly144 contacts ATP. Positions 166-168 are interaction with tRNA; sequence RDQ. Residue Cys217 is the Cysteine persulfide intermediate of the active site.

It belongs to the MnmA/TRMU family.

The protein localises to the cytoplasm. It carries out the reaction S-sulfanyl-L-cysteinyl-[protein] + uridine(34) in tRNA + AH2 + ATP = 2-thiouridine(34) in tRNA + L-cysteinyl-[protein] + A + AMP + diphosphate + H(+). Catalyzes the 2-thiolation of uridine at the wobble position (U34) of tRNA, leading to the formation of s(2)U34. The polypeptide is tRNA-specific 2-thiouridylase MnmA (Roseobacter denitrificans (strain ATCC 33942 / OCh 114) (Erythrobacter sp. (strain OCh 114))).